A 333-amino-acid polypeptide reads, in one-letter code: MIILGIESSCDDTAAAVVSDHNTVLSSVVSSQVDVHHRYGGVVPELASRMHIEAISPVVAQAVDQAGISPDQIEGVAVTRGPGLIGALLVGFSFAKAFAWAKNIPWAGVNHLEGHIYSLLLSDDPPAFPFTALLASGGHTSIFHVVSQDRFELLGQTRDDAAGEAFDKVAKMLGLGYPGGAVVEALAAKGDPCLIPFPRSFLDKDGFDFSFSGLKSAVARYVQLNRENLGEMMPHIAAGFQSAVTDVLAFKLIHAARATGCSRIAIAGGVSANRFLASRMKIEAAKHNMALYLPPPSFCGDNAAMIAARGHRLISQGDLCQLDSDVFSRTRFL.

Residues His-111 and His-115 each coordinate Fe cation. Residues 134 to 138 (LASGG), Asp-167, Gly-180, and Asn-273 each bind substrate. Asp-301 is a Fe cation binding site.

This sequence belongs to the KAE1 / TsaD family. It depends on Fe(2+) as a cofactor.

The protein resides in the cytoplasm. The catalysed reaction is L-threonylcarbamoyladenylate + adenosine(37) in tRNA = N(6)-L-threonylcarbamoyladenosine(37) in tRNA + AMP + H(+). In terms of biological role, required for the formation of a threonylcarbamoyl group on adenosine at position 37 (t(6)A37) in tRNAs that read codons beginning with adenine. Is involved in the transfer of the threonylcarbamoyl moiety of threonylcarbamoyl-AMP (TC-AMP) to the N6 group of A37, together with TsaE and TsaB. TsaD likely plays a direct catalytic role in this reaction. In Desulforapulum autotrophicum (strain ATCC 43914 / DSM 3382 / VKM B-1955 / HRM2) (Desulfobacterium autotrophicum), this protein is tRNA N6-adenosine threonylcarbamoyltransferase.